The chain runs to 507 residues: Cysteine--tRNA ligase (507 aa).

Zn(2+) is bound at residue Cys-29. Residues 31-41 (PTVYDVPHIGN) carry the 'HIGH' region motif. Zn(2+)-binding residues include Cys-207, His-232, and Glu-236. A 'KMSKS' region motif is present at residues 265 to 269 (KMSKS). ATP is bound at residue Lys-268.

It belongs to the class-I aminoacyl-tRNA synthetase family. As to quaternary structure, monomer. The cofactor is Zn(2+).

The protein resides in the cytoplasm. The enzyme catalyses tRNA(Cys) + L-cysteine + ATP = L-cysteinyl-tRNA(Cys) + AMP + diphosphate. This Neorickettsia sennetsu (strain ATCC VR-367 / Miyayama) (Ehrlichia sennetsu) protein is Cysteine--tRNA ligase.